A 151-amino-acid polypeptide reads, in one-letter code: Large ribosomal subunit protein uL13 (151 aa).

This sequence belongs to the universal ribosomal protein uL13 family. Part of the 50S ribosomal subunit.

Functionally, this protein is one of the early assembly proteins of the 50S ribosomal subunit, although it is not seen to bind rRNA by itself. It is important during the early stages of 50S assembly. The sequence is that of Large ribosomal subunit protein uL13 from Petrotoga mobilis (strain DSM 10674 / SJ95).